The sequence spans 312 residues: Short chain dehydrogenase pgmD (312 aa).

NADP(+) contacts are provided by valine 46, isoleucine 47, lysine 171, tyrosine 207, lysine 211, and threonine 242. Residue tyrosine 207 is the Proton donor of the active site. Lysine 211 acts as the Lowers pKa of active site Tyr in catalysis.

Belongs to the short-chain dehydrogenases/reductases (SDR) family.

It participates in pigment biosynthesis. It functions in the pathway secondary metabolite biosynthesis. In terms of biological role, short chain dehydrogenase; part of the gene cluster that mediates the biosynthesis of pleosporalin A, ascomycone A, as well as a third cryptic naphthoquinone derived pigment, all responsible for the coloration of conidia. Essential for the production of pleosporalin A, but not the 2 other final products. The pathway begins with the biosynthesis of the cyclized heptaketide 3-acetonyl-1,6,8-trihydroxy-2-naphthaldehyde by the NR-PKS pgmA. The C-6 hydroxyl group is further methylated by the O-methyltransferase pgmB to yield fusarubinaldehyde which is in turn oxidized by the cytochrome P450 monooxygenase pgmC at C-9. The C-1 hydroxyl group is then methylated spontaneously. Although pgmE, pgmD and pgmH are essential for the production of pleosporalin A, it is not the case for the 2 other final products and it remains difficult to assign a specific function to each enzyme. PgmF and pgmG seem not to be involved in pigment biosynthesis although they were regulated by the cluster-specific transcription factor pgmR. The protein is Short chain dehydrogenase pgmD of Aspergillus terreus (strain NIH 2624 / FGSC A1156).